The sequence spans 649 residues: Leucine-rich repeat transmembrane protein FLRT3 (649 aa).

Residues 1 to 28 (MISPAWSLFLIGTKIGLFFQVAPLSVMA) form the signal peptide. Residues 29–58 (KSCPSVCRCDAGFIYCNDRSLTSIPVGIPE) enclose the LRRNT domain. The Extracellular portion of the chain corresponds to 29-528 (KSCPSVCRCD…KEPYKNPNLP (500 aa)). Intrachain disulfides connect Cys31-Cys37 and Cys35-Cys44. Positions 38–67 (DAGFIYCNDRSLTSIPVGIPEDATTLYLQN) are interaction with ADGRL3. LRR repeat units lie at residues 59–80 (DATTLYLQNNQINNVGIPSDLK), 84–104 (KVQRIYLYHNSLDEFPTNLPK), 105–126 (YVKELHLQENNIRTITYDSLSK), 129–150 (YLEELHLDDNSVSAVSIEEGAF), 155–176 (YLRLLFLSRNHLSTIPGGLPRT), 177–197 (IEELRLDDNRISTISSPSLHG), 200–220 (SLKRLVLDGNLLNNHGLGDKV), 226–247 (NLTELSLVRNSLTAAPVNLPGT), 248–269 (SLRKLYLQDNHINRVPPNAFSY), and 272–293 (QLYRLDMSNNNLSNLPQGIFDD). A glycan (N-linked (GlcNAc...) asparagine) is linked at Asn226. N-linked (GlcNAc...) asparagine glycans are attached at residues Asn282 and Asn296. The LRRCT domain maps to 305 to 357 (NPWYCGCKMKWVRDWLQSLPVKVNVRGLMCQAPEKVRGMAIKDLSAELFDCKD). Cys309 and Cys334 are joined by a disulfide. A disordered region spans residues 378–405 (QGQWPAPVTKQPDIKNPKLTKDQRTTGS). Residues 389-401 (PDIKNPKLTKDQR) are compositionally biased toward basic and acidic residues. In terms of domain architecture, Fibronectin type-III spans 405–504 (SPSRKTILIT…VCIETQTAPL (100 aa)). Residues 529-549 (LAAIIGGAVALVSIALLALVC) traverse the membrane as a helical segment. The Cytoplasmic portion of the chain corresponds to 550 to 649 (WYVHRNGSLF…GIPDLDHSHS (100 aa)). Residues 629-649 (ESSSNRSYRDSGIPDLDHSHS) are disordered.

In terms of assembly, monomer and homodimer. Self-associates (via leucine-rich repeats), giving rise to homooligomers. Interacts with FGFR1. Interacts (via extracellular domain) with ADGRL1/LPHN1 and ADGRL3 (via olfactomedin-like domain). Interacts (via extracellular domain) with LPHN2 (via olfactomedin-like domain). Interacts (via extracellular domain) with UNC5B (via Ig domain). May also interact (via extracellular domain) with UNC5A and UNC5C. Interacts (via extracellular domain) with UNC5D (via extracellular domain). Identified in complexes composed of FLRT3, ADGRL3 and UNC5B, respectively FLRT3, ADGRL3 and UNC5D. Interacts (via cytoplasmic domain) with ROBO1. In terms of processing, N-glycosylated. Post-translationally, proteolytic cleavage in the juxtamembrane region gives rise to a soluble ectodomain. Cleavage is probably effected by a metalloprotease. As to expression, detected in brain (at protein level). Detected in brain neurons, especially in basal ganglia, hippocampus dentate gyrus and CA3 region, cerebellum and in olfactory bulb.

The protein resides in the cell membrane. The protein localises to the presynaptic cell membrane. Its subcellular location is the synapse. It is found in the synaptosome. It localises to the postsynaptic density. The protein resides in the cell projection. The protein localises to the dendrite. Its subcellular location is the axon. It is found in the growth cone membrane. It localises to the cytoplasmic vesicle. The protein resides in the endoplasmic reticulum membrane. The protein localises to the cell junction. Its subcellular location is the focal adhesion. It is found in the secreted. Functionally, functions in cell-cell adhesion, cell migration and axon guidance, exerting an attractive or repulsive role depending on its interaction partners. Plays a role in the spatial organization of brain neurons. Plays a role in vascular development in the retina. Plays a role in cell-cell adhesion via its interaction with ADGRL3 and probably also other latrophilins that are expressed at the surface of adjacent cells. Interaction with the intracellular domain of ROBO1 mediates axon attraction towards cells expressing NTN1. Mediates axon growth cone collapse and plays a repulsive role in neuron guidance via its interaction with UNC5B, and possibly also other UNC-5 family members. Promotes neurite outgrowth (in vitro). Mediates cell-cell contacts that promote an increase both in neurite number and in neurite length. Plays a role in the regulation of the density of glutamaergic synapses. Plays a role in fibroblast growth factor-mediated signaling cascades. Required for normal morphogenesis during embryonic development, but not for normal embryonic patterning. Required for normal ventral closure, headfold fusion and definitive endoderm migration during embryonic development. Required for the formation of a normal basement membrane and the maintenance of a normal anterior visceral endoderm during embryonic development. This Rattus norvegicus (Rat) protein is Leucine-rich repeat transmembrane protein FLRT3 (Flrt3).